A 421-amino-acid chain; its full sequence is Alpha-1-antiproteinase 2 (421 aa).

An N-terminal signal peptide occupies residues Met-1–Ala-24. 3 N-linked (GlcNAc...) asparagine glycosylation sites follow: Asn-73, Asn-110, and Asn-274. The RCL stretch occupies residues Gly-376–Arg-395.

This sequence belongs to the serpin family. Post-translationally, N-glycosylated with carbohydrates having biantennary side chains. Plasma.

The protein localises to the secreted. Its function is as follows. Inhibitor of serine proteases. This is Alpha-1-antiproteinase 2 from Equus caballus (Horse).